The sequence spans 381 residues: MGIKNLATLISEQVPNAIKSRDIKYFHGRKVAIDASMSLYQFLIAVRQQDGVQLAGEDGETTSHLMGMFYRTLRMIDHGIKPCYVFDGSPPELKKYELDKRKVRREDTEAKLKEATEQAEIIKHERRLVKVLPWHNEEAQKLLSLMGIPYVVAPAEAEAQCAELAKSGKVFAAASEDMDTLCYQTPVLLRHLTFSEARKLPIQEFDTDVIYNTLDLTQTQFIDLGIILGCDYCEGIKGVGPVNALKLIKEHGSLEAIVEKFENGDISSGRWKIPEGWQFKEARDLFMQPDVIPSEEVTLKWEEPKAEELIEFMVKEKGFNEDRIKSGIERLRKGLKVGVQKRLDSFFKIQPKTKEELATAAKKAKDAKKKAAAKGKIAKRR.

An N-domain region spans residues Met-1–Arg-105. Residue Asp-34 participates in Mg(2+) binding. The DNA site is built by Arg-47 and Arg-71. Mg(2+)-binding residues include Asp-87, Glu-156, Glu-158, Asp-177, and Asp-179. The I-domain stretch occupies residues Glu-120–His-251. Residue Glu-156 participates in DNA binding. DNA-binding residues include Gly-229 and Asp-231. Asp-231 is a Mg(2+) binding site. Positions Val-339–Phe-347 are interaction with PCNA. The tract at residues Ala-360–Arg-381 is disordered. Residues Lys-365–Arg-381 show a composition bias toward basic residues.

Belongs to the XPG/RAD2 endonuclease family. FEN1 subfamily. In terms of assembly, interacts with PCNA. Three molecules of FEN1 bind to one PCNA trimer with each molecule binding to one PCNA monomer. PCNA stimulates the nuclease activity without altering cleavage specificity. The cofactor is Mg(2+). Phosphorylated. Phosphorylation upon DNA damage induces relocalization to the nuclear plasma.

The protein localises to the nucleus. The protein resides in the nucleolus. It is found in the nucleoplasm. It localises to the mitochondrion. Functionally, structure-specific nuclease with 5'-flap endonuclease and 5'-3' exonuclease activities involved in DNA replication and repair. During DNA replication, cleaves the 5'-overhanging flap structure that is generated by displacement synthesis when DNA polymerase encounters the 5'-end of a downstream Okazaki fragment. It enters the flap from the 5'-end and then tracks to cleave the flap base, leaving a nick for ligation. Also involved in the long patch base excision repair (LP-BER) pathway, by cleaving within the apurinic/apyrimidinic (AP) site-terminated flap. Acts as a genome stabilization factor that prevents flaps from equilibrating into structures that lead to duplications and deletions. Also possesses 5'-3' exonuclease activity on nicked or gapped double-stranded DNA, and exhibits RNase H activity. Also involved in replication and repair of rDNA and in repairing mitochondrial DNA. The sequence is that of Flap endonuclease 1 from Kluyveromyces lactis (strain ATCC 8585 / CBS 2359 / DSM 70799 / NBRC 1267 / NRRL Y-1140 / WM37) (Yeast).